The sequence spans 433 residues: Homoserine dehydrogenase (433 aa).

3 residues coordinate NADPH: threonine 12, valine 13, and lysine 102. Valine 13 contacts NAD(+). NADP(+) contacts are provided by valine 13 and lysine 102. Positions 126, 129, 131, and 133 each coordinate Na(+). NADP(+) contacts are provided by glycine 184 and glutamate 187. Positions 187 and 198 each coordinate L-homoserine. Lysine 202 functions as the Proton donor in the catalytic mechanism. An NADPH-binding site is contributed by glycine 303. An NAD(+)-binding site is contributed by glycine 303. NADP(+) is bound at residue glycine 303. The 78-residue stretch at 356 to 433 (YCRFLCADVP…EIPSVIRVLS (78 aa)) folds into the ACT domain.

This sequence belongs to the homoserine dehydrogenase family. A metal cation is required as a cofactor.

It catalyses the reaction L-homoserine + NADP(+) = L-aspartate 4-semialdehyde + NADPH + H(+). It carries out the reaction L-homoserine + NAD(+) = L-aspartate 4-semialdehyde + NADH + H(+). The protein operates within amino-acid biosynthesis; L-methionine biosynthesis via de novo pathway; L-homoserine from L-aspartate: step 3/3. It participates in amino-acid biosynthesis; L-threonine biosynthesis; L-threonine from L-aspartate: step 3/5. In terms of biological role, catalyzes the conversion of L-aspartate-beta-semialdehyde (L-Asa) to L-homoserine (L-Hse), the third step in the biosynthesis of threonine and methionine from aspartate. This chain is Homoserine dehydrogenase (hom), found in Synechocystis sp. (strain ATCC 27184 / PCC 6803 / Kazusa).